We begin with the raw amino-acid sequence, 117 residues long: uncharacterized protein (117 aa).

2 helical membrane passes run 9–29 and 56–76; these read ITSH…FIPF and VIIV…FFIP.

It is found in the membrane. This is an uncharacterized protein from Saccharomyces cerevisiae (strain ATCC 204508 / S288c) (Baker's yeast).